Reading from the N-terminus, the 341-residue chain is MAGVMSVKDFIVATKYKLIRKIGSGSFGDIYVSINVTNGEEVAIKLESNRARHPQLLYESKVYRILQGGVGIPHIRWYGTEREYNVLVMDLLGPSLEDLFNFCSRRFTMKTVLMLADQMIGRIEYVHVKNFIHRDIKPDNFLMGIGRHCNKLFLIDFGLAKKYRDSRTRTHIPYREDKNLTGTARYASINAHLGIEQSRRDDMESLGYVLMYFNRGTLPWQGLKAATKKQKYEKISEKKMTTSVEHLCKGFPAEFPMYLSYTRGLRFDESPDYMYLRQLFRILFRTLNHQYDYTFDWTMLKQKAQQSQSSGVPGTNTTTQGATVPSAGVPAGVAPGGTTPQ.

The Protein kinase domain occupies Tyr-16 to Phe-284. Residues Ile-22–Ile-30 and Lys-45 each bind ATP. The Proton acceptor role is filled by Asp-135. The span at Gln-306–Gln-320 shows a compositional bias: polar residues. The disordered stretch occupies residues Gln-306–Gln-341. The segment covering Gly-321–Gln-341 has biased composition (low complexity).

It belongs to the protein kinase superfamily. CK1 Ser/Thr protein kinase family. Casein kinase I subfamily.

The enzyme catalyses L-seryl-[protein] + ATP = O-phospho-L-seryl-[protein] + ADP + H(+). The catalysed reaction is L-threonyl-[protein] + ATP = O-phospho-L-threonyl-[protein] + ADP + H(+). The protein is Casein kinase I isoform alpha (kin-19) of Caenorhabditis elegans.